A 354-amino-acid chain; its full sequence is Trans-enoyl reductase pydC (354 aa).

The region spanning 16–342 (ANTDPVTFEI…RREVSGEKIV (327 aa)) is the Enoyl reductase (ER) domain. NADP(+)-binding positions include 51–54 (CDYK), 180–183 (SPKN), Tyr-198, 245–246 (FE), and 336–337 (VS).

The protein belongs to the zinc-containing alcohol dehydrogenase family. In terms of assembly, monomer.

It functions in the pathway mycotoxin biosynthesis. Its function is as follows. Trans-enoyl reductase; part of the gene cluster that mediates the biosynthesis of pyrrocidines, fungal natural products containing a macrocyclic para-cyclophane connected to a decahydrofluorene ring system that show potent antibiotic activities toward Gram-negative bacteria. Within the pathway, the PKS-NRPS pydA, with the help of the trans-enoyl reductase pydC, synthesize the polyketide-tyrosyl acyl thioester product which can be reductively off-loaded by the terminal reductase (R) domain in pydA. The PKS module of pydA acts in combination with the trans-acting enoyl reductase pydC to produce a methylated polyketide attached to the ACP domain. In parallel, the adenylation (A) domain of the NRPS module activated L-tyrosine, which is then transferred to the ACP domain. The condensation (C) domain subsequently link this group to the polyketide chain, forming an enzyme-bound amide. The alpha/beta hydrolase pydG is then required to catalyze the subsequent Knoevenagel condensation that affords the 3-pyrrolin-2-one ring, whereas the four proteins pydB, pydE, pydX and pydZ then function synergistically to form the cyclophane. PydB and the membrane-bound pydX and pydZ are lipid-binding proteins that can sequester and mold the pdyG product into the inverse S-shape. Binding of the medium chain reductase pydE to the complex would trigger the cascade oxidative cyclization. PydY is involved in the Diels-Alder cycloaddition that forms the decahydrofluorene core. Additional non-enzymatic hydroxylation yields pyrrocidine A2 which can be further reduced into pyrrocidine B by an endogenous reductase. The protein is Trans-enoyl reductase pydC of Acremonium sp.